The primary structure comprises 362 residues: Protein RecA (362 aa).

77-84 (GPESSGKT) is a binding site for ATP.

Belongs to the RecA family.

The protein resides in the cytoplasm. In terms of biological role, can catalyze the hydrolysis of ATP in the presence of single-stranded DNA, the ATP-dependent uptake of single-stranded DNA by duplex DNA, and the ATP-dependent hybridization of homologous single-stranded DNAs. It interacts with LexA causing its activation and leading to its autocatalytic cleavage. This chain is Protein RecA, found in Nitrobacter winogradskyi (strain ATCC 25391 / DSM 10237 / CIP 104748 / NCIMB 11846 / Nb-255).